A 535-amino-acid polypeptide reads, in one-letter code: Arylsulfatase G (535 aa).

A signal peptide spans 1-18 (MGWLFLKVLFLGVTFLGC). Residues D44, D45, and C84 each coordinate Ca(2+). The active-site Nucleophile is C84. C84 carries the post-translational modification 3-oxoalanine (Cys). A glycan (N-linked (GlcNAc...) asparagine) is linked at N117. K137 serves as a coordination point for substrate. H139 is a catalytic residue. S162 is a binding site for substrate. N215 is a glycosylation site (N-linked (GlcNAc...) asparagine). Substrate is bound at residue H251. Ca(2+) contacts are provided by D302 and N303. N-linked (GlcNAc...) asparagine glycosylation is found at N356 and N497.

This sequence belongs to the sulfatase family. Ca(2+) is required as a cofactor. In terms of processing, N-glycosylated with both high mannose and complex type sugars. Post-translationally, the conversion to 3-oxoalanine (also known as C-formylglycine, FGly), of a serine or cysteine residue in prokaryotes and of a cysteine residue in eukaryotes, is critical for catalytic activity. The 63-kDa precursor undergoes proteolytic processing in two steps, yielding two fragments in the first step (apparent molecular masses of 44 and 18 kDa). In the second step, the 44-kDa fragment is processed further to the 34- and 10-kDa chains. The 10-kDa chain is a cleavage product of the 44-kDa fragment but linked to the 18-kDa chain through a disulfide bridge.

It localises to the lysosome. It carries out the reaction an aryl sulfate + H2O = a phenol + sulfate + H(+). The catalysed reaction is Hydrolysis of the 3-sulfate groups of the N-sulfo-D-glucosamine 3-O-sulfate units of heparin.. Displays arylsulfatase activity with pseudosubstrates at acidic pH, such as p-nitrocatechol sulfate. Catalyzes the hydrolysis of the 3-sulfate groups of the N-sulfo-D-glucosamine 3-O-sulfate units of heparin. The chain is Arylsulfatase G (ARSG) from Canis lupus familiaris (Dog).